The sequence spans 232 residues: 7-cyano-7-deazaguanine synthase 2 (232 aa).

9–19 serves as a coordination point for ATP; it reads FSGGQDSTTCL. 4 residues coordinate Zn(2+): Cys-189, Cys-198, Cys-201, and Cys-204.

Belongs to the QueC family. Zn(2+) is required as a cofactor.

The catalysed reaction is 7-carboxy-7-deazaguanine + NH4(+) + ATP = 7-cyano-7-deazaguanine + ADP + phosphate + H2O + H(+). Its pathway is purine metabolism; 7-cyano-7-deazaguanine biosynthesis. In terms of biological role, catalyzes the ATP-dependent conversion of 7-carboxy-7-deazaguanine (CDG) to 7-cyano-7-deazaguanine (preQ(0)). This is 7-cyano-7-deazaguanine synthase 2 from Pseudomonas fluorescens (strain ATCC BAA-477 / NRRL B-23932 / Pf-5).